The following is a 665-amino-acid chain: MSEQSCQMSELRLLLLGKCRSGKSATGNAILGKHVFKSKFSDQTVIKMCQRESWVLRERKVVVIDTPDLFSSIACAEDKQRNIQHCLELSAPSLHALLLVIAIGHFTREDEETAKGIQQVFGAEARRHIIIVFTRKDDLGDDLLQDFIEKNKPLKQLVQDYEGRYCIFNNKTNSKDEQITQVLELLRKVESLVNTNGGPYHVNFKTEGSRFQDCVNEAASQEGDKPQGPRERQLQSTGPEQNPGTSELTVLLVGKRGAGKSAAGNSILGRQAFQTGFSEQSVTQSFLSESRSWRKKKVSIIDAPDISSLKNIDSEVRKHICTGPHAFLLVTPLGFYTKNDEAVLSTIQNNFGEKFFEYMIILLTRKEDLGDQDLDTFLRNSNKALYGLIQKCKNRYSAFNYRATGEEEQRQADELLEKIESMVHQNGNKHCVFREKETLNIVLVGRSGTGKSATGNSILGSLVFTSRLRAQPVTKTSQSGRRTWDGQEVVVVDTPSFNQMLDVEKDPSRLEEEVKRCLSCCEKGDTFFVLVFQLGRFTEEDKTAVAKLEAIFGADFTKYAIMLFTRKEDLGAGNLEDFMKNSDNKALRRIFKKCGRRVCAFNNKETGQAQETQVKALLTKVNDLRKESGWSGYPHTQENVSKLIKNVQEMSQAEKLLKNLIGILQ.

The region spanning Met8 to Arg210 is the AIG1-type G 1 domain. The interval Gly17–Ser24 is G1. Residues Gly17 to Ala25 and Ser38 contribute to the GTP site. Residues Thr44–Met48 form a G2 region. The tract at residues Asp65 to Asp68 is G3. The G4 stretch occupies residues Thr134–Asp137. Residues Arg135 to Asp137 and Asn170 each bind GTP. A G5 region spans residues Asn169 to Lys171. The segment at Glu217–Ser246 is disordered. The span at Glu222–Gln233 shows a compositional bias: basic and acidic residues. Polar residues predominate over residues Leu234–Ser246. 2 consecutive AIG1-type G domains span residues Thr245–Glu435 and Lys436–Ile644. Coiled coils occupy residues Asn400 to Gly427 and Gln608 to Leu657.

It belongs to the TRAFAC class TrmE-Era-EngA-EngB-Septin-like GTPase superfamily. AIG1/Toc34/Toc159-like paraseptin GTPase family. IAN subfamily. As to expression, expressed in the spleen, intestine, liver, and colon, as well as in lung, placenta, kidney, muscle, and heart. Extremely low expression, if any, in brain, in thymus, bone marrow, and blood leukocytes. Detected in T-cells.

The protein resides in the endoplasmic reticulum. The protein localises to the golgi apparatus. Its subcellular location is the mitochondrion. It is found in the cytoplasm. It localises to the cytosol. In terms of biological role, exerts an anti-apoptotic effect in the immune system and is involved in responses to infections. This Homo sapiens (Human) protein is GTPase IMAP family member 8 (GIMAP8).